A 1929-amino-acid chain; its full sequence is Intraflagellar transport protein 140 (1929 aa).

WD repeat units lie at residues 76–116 (QVQV…PSYK) and 119–158 (LHQEELCLIKWLSHGRILVTCDVSGQVILYKFSTDTYSFE). Residues 774 to 795 (LSTPDTGSPAVEAEESPQRQTR) form a disordered region. 3 LRR repeats span residues 957-980 (STSLNLLFVGSSMLFALKTGTFTK), 1019-1044 (ISLLQSIYISSEQRAKVPLLVQSLAE), and 1510-1532 (AQSLELCIKSNRMKELSNLLADI).

Its subcellular location is the cell projection. It localises to the cilium. The protein localises to the flagellum. The protein resides in the cytoplasm. It is found in the cytoskeleton. Its subcellular location is the flagellum axoneme. It localises to the flagellum basal body. Its function is as follows. Component of the intraflagellar transport complex A (IFT-A) involved in flagellar assembly. The protein is Intraflagellar transport protein 140 of Giardia intestinalis (strain ATCC 50803 / WB clone C6) (Giardia lamblia).